Here is a 226-residue protein sequence, read N- to C-terminus: Ornithine decarboxylase antizyme (226 aa).

Belongs to the ODC antizyme family. In terms of assembly, interacts with ODC and thereby sterically blocks ODC homodimerization.

Its function is as follows. Ornithine decarboxylase (ODC) antizyme protein that negatively regulates ODC activity and intracellular polyamine biosynthesis in response to increased intracellular polyamine levels. Binds to ODC monomers, inhibiting the assembly of the functional ODC homodimer, and targets the monomers for ubiquitin-independent proteolytic destruction by the 26S proteasome. In Schizosaccharomyces japonicus (Fission yeast), this protein is Ornithine decarboxylase antizyme (spa1).